Consider the following 110-residue polypeptide: FMRFamide-like neuropeptides 11 (110 aa).

Residues 1-22 (MTQFSALALLLIVFVAASFAQS) form the signal peptide. A propeptide spanning residues 23–29 (YDDVSAE) is cleaved from the precursor. Phenylalanine amide occurs at positions 40 and 54. The tract at residues 60-85 (LDEEDFAPESPLQGKRNGAPQPFVRF) is disordered. Glutamine 72 bears the Glutamine amide mark. Position 85 is a phenylalanine amide (phenylalanine 85). The propeptide occupies 88-110 (SGQLDHMHDLLSTLQKLKFANNK).

It belongs to the FARP (FMRFamide related peptide) family. Each flp gene is expressed in a distinct set of neurons. Flp-11 is expressed in the DD, VD and DVB motor neurons, the PVC and URX interneurons, and the AUA, BAG, DA, LUA, and SAB neurons. Also expressed in head muscle, socket or sheath cells and uterine cells. Expressed exclusively in PHC sensory neurons in males. Expressed in AVK and RIS interneurons.

It is found in the secreted. In terms of biological role, FMRFamides and FMRFamide-like peptides are neuropeptides. Induces sleep-like quiescence behavior following release from RIS interneuron. Helps to sustain locomotion stop after gamma-aminobutyric acid (GABA) induces fast slowing response. Inhibits the late-stage body bend swimming frequency in animals through several receptors including frpr-3, npr-4 and npr-22. Potent inhibitor of the activity of the dissected pharyngeal myogenic muscle system. Acts as a ligand for the npr-22 receptor in vitro. Functionally, acts as a ligand for the npr-22 receptor in vitro. This chain is FMRFamide-like neuropeptides 11, found in Caenorhabditis elegans.